The sequence spans 249 residues: MMSCGGKKPVSKKTTPCCTKMGMKRGPWTVEEDEILVSFIKKEGEGRWRSLPKRAGLLRCGKSCRLRWMNYLRPSVKRGGITSDEEDLILRLHRLLGNRWSLIAGRIPGRTDNEIKNYWNTHLRKKLLRQGIDPQTHKPLDANNIHKPEEEVSGGQKYPLEPISSSHTDDTTVNGGDGDSKNSINVFGGEHGYEDFGFCYDDKFSSFLNSLINDVGDPFGNIIPISQPLQMDDCKDGIVGASSSSLGHD.

HTH myb-type domains are found at residues 20–72 and 73–127; these read KMGM…MNYL and RPSV…RKKL. 2 consecutive DNA-binding regions (H-T-H motif) follow at residues 48–72 and 100–123; these read WRSL…MNYL and WSLI…NTHL. The segment at 133-180 is disordered; that stretch reads DPQTHKPLDANNIHKPEEEVSGGQKYPLEPISSSHTDDTTVNGGDGDS. The segment covering 135–150 has biased composition (basic and acidic residues); it reads QTHKPLDANNIHKPEE.

In terms of assembly, interacts with BHLH002/EGL3/MYC146, BHLH012/MYC1 and BHLH042/TT8. Siliques.

It is found in the nucleus. In terms of biological role, transcription activator, when associated with BHLH002/EGL3/MYC146, BHLH012/MYC1 or BHLH042/TT8. The polypeptide is Transcription repressor MYB5 (MYB5) (Arabidopsis thaliana (Mouse-ear cress)).